The chain runs to 614 residues: Glucose oxidase 1 (614 aa).

The first 15 residues, 1 to 15 (MKSIILSCFVISAAA), serve as a signal peptide directing secretion. FAD contacts are provided by Leu52, Thr53, and Glu73. Residue Asn112 is glycosylated (N-linked (GlcNAc...) asparagine). Residues 117 to 136 (IRSGNGLGGSTLTNGGSWTR) are disordered. FAD contacts are provided by Ser126, Asn130, Gly131, and Ser133. N-linked (GlcNAc...) asparagine glycans are attached at residues Asn184 and Asn191. Cys187 and Cys229 form a disulfide bridge. Residue Val273 coordinates FAD. Residues Asn279, Asn383, and Asn416 are each glycosylated (N-linked (GlcNAc...) asparagine). The active-site Proton acceptor is His544. O2 is bound by residues Arg565 and Val566. The FAD site is built by Gly577 and Met589.

This sequence belongs to the GMC oxidoreductase family. As to quaternary structure, homodimer. The cofactor is FAD.

Its subcellular location is the secreted. It localises to the cell wall. It is found in the cytoplasm. The protein resides in the extracellular space. The protein localises to the extracellular matrix. The catalysed reaction is beta-D-glucose + O2 = D-glucono-1,5-lactone + H2O2. In terms of biological role, glucose oxidase catalyzes the oxidation of beta-D-glucose to D-glucono-delta-lactone and hydrogen peroxide in the presence of molecular oxygen. The protein is Glucose oxidase 1 of Penicillium expansum (Blue mold rot fungus).